Here is a 412-residue protein sequence, read N- to C-terminus: Multidrug resistance protein MdtG (412 aa).

11 helical membrane passes run 19-39 (LGCF…PLYV), 56-76 (LVFS…GGLA), 90-110 (LGMS…QFLL), 113-133 (ALLG…ATQI), 144-164 (TLST…GFLA), 171-191 (TVFF…LFLI), 222-242 (LFVT…ILTL), 254-274 (IAFI…MSAP), 288-308 (ILIV…FVQT), 317-337 (FLLG…LVYN), and 376-396 (AVFL…TLSL).

Belongs to the major facilitator superfamily. DHA1 family. MdtG (TC 2.A.1.2.20) subfamily.

The protein localises to the cell inner membrane. This Klebsiella pneumoniae (strain 342) protein is Multidrug resistance protein MdtG.